Reading from the N-terminus, the 21-residue chain is Mast cell protease 3 (21 aa).

The Peptidase S1 domain maps to 1–21; it reads IIGGVESRPHSRPYMATLEIT. The segment at 1-21 is disordered; that stretch reads IIGGVESRPHSRPYMATLEIT.

This sequence belongs to the peptidase S1 family. Granzyme subfamily.

Its function is as follows. Thrombin inactivating protease. Displays chymotrypsin-like substrate specificity. This chain is Mast cell protease 3 (Mcpt3), found in Mus musculus (Mouse).